A 360-amino-acid chain; its full sequence is MKLVFRWFGEKHDTVTLEQIRQIPGVEGVVGALFDIPVGEVWPLEEIMKLKETVERAGLKLEVIESVNVHEDIKLGLPTRDRYIENYKETIRNLAKAGVKVVCYNFMPVFDWMRTDLHKKLPDGSETMEYDHSLIEGVTPDELIERVKEGSEGFVLPGWEWDRLEKLRETFELYKNVDEEKLFENLVYFLERVIPVCEECDVKLAIHPDDPPWSIFGLPRIITNKENIERLLKAVDSPYNGITLCMGSLGANPENNIPEMIRYFGKMGRIHFAHVRNLKFTGEKSFYETAHPSFCGSHDLFEVMKAFHDIGYEGYIRPDHGRLIWGEKARPGYGLYDRALGATYILGLWEAISKMKERYC.

Belongs to the mannonate dehydratase family. The cofactor is Fe(2+). It depends on Mn(2+) as a cofactor.

It carries out the reaction D-mannonate = 2-dehydro-3-deoxy-D-gluconate + H2O. Its pathway is carbohydrate metabolism; pentose and glucuronate interconversion. In terms of biological role, catalyzes the dehydration of D-mannonate. In Thermotoga neapolitana, this protein is Mannonate dehydratase (uxuA).